Reading from the N-terminus, the 167-residue chain is Phospholipase A and acyltransferase 1 (167 aa).

The Cytoplasmic segment spans residues 1-138 (MAVNDCFSLT…GEGVSEQANR (138 aa)). The LRAT domain occupies 20–135 (LIEVFRPCYQ…LRYGEGVSEQ (116 aa)). The active site involves His30. The Acyl-thioester intermediate role is filled by Cys119. The helical transmembrane segment at 139 to 159 (AIGTIGLVAAGIDIFTFLGLF) threads the bilayer. At 160 to 167 (PKRQRTKY) the chain is on the lumenal side.

This sequence belongs to the H-rev107 family. As to expression, expressed in skeletal muscle, heart, brain, bone marrow and testis. In terms of tissue distribution, abundantly expressed in brain, heart, and skeletal muscle.

Its subcellular location is the membrane. It localises to the cytoplasm. The protein resides in the nucleus. It catalyses the reaction a 1,2-diacyl-sn-glycero-3-phosphocholine + H2O = a 1-acyl-sn-glycero-3-phosphocholine + a fatty acid + H(+). The enzyme catalyses a 1,2-diacyl-sn-glycero-3-phosphocholine + H2O = a 2-acyl-sn-glycero-3-phosphocholine + a fatty acid + H(+). The catalysed reaction is 1,2-dihexadecanoyl-sn-glycero-3-phosphocholine + H2O = 2-hexadecanoyl-sn-glycero-3-phosphocholine + hexadecanoate + H(+). It carries out the reaction 1,2-dihexadecanoyl-sn-glycero-3-phosphocholine + H2O = 1-hexadecanoyl-sn-glycero-3-phosphocholine + hexadecanoate + H(+). It catalyses the reaction 1-hexadecanoyl-2-(5Z,8Z,11Z,14Z-eicosatetraenoyl)-sn-glycero-3-phosphoethanolamine + H2O = 2-(5Z,8Z,11Z,14Z)-eicosatetraenoyl-sn-glycero-3-phosphoethanolamine + hexadecanoate + H(+). The enzyme catalyses 1-hexadecanoyl-2-(5Z,8Z,11Z,14Z-eicosatetraenoyl)-sn-glycero-3-phosphoethanolamine + H2O = 1-hexadecanoyl-sn-glycero-3-phosphoethanolamine + (5Z,8Z,11Z,14Z)-eicosatetraenoate + H(+). The catalysed reaction is 1,2-di-(9Z-octadecenoyl)-sn-glycero-3-phosphoethanolamine + 1,2-dihexadecanoyl-sn-glycero-3-phosphocholine = hexadecanoyl-sn-glycero-3-phosphocholine + N-hexadecanoyl-1,2-di-(9Z-octadecenoyl)-sn-glycero-3-phosphoethanolamine + H(+). It carries out the reaction 1,2-dihexadecanoyl-sn-glycero-3-phosphocholine + a 2-acyl-sn-glycero-3-phosphocholine = a 1-hexadecanoyl-2-acyl-sn-glycero-3-phosphocholine + 2-hexadecanoyl-sn-glycero-3-phosphocholine. Exhibits both phospholipase A1/2 and acyltransferase activities. Shows phospholipase A1 (PLA1) and A2 (PLA2) activity, catalyzing the calcium-independent release of fatty acids from the sn-1 or sn-2 position of glycerophospholipids. Shows O-acyltransferase activity, catalyzing the transfer of a fatty acyl group from glycerophospholipid to the hydroxyl group of lysophospholipid. Shows N-acyltransferase activity, catalyzing the calcium-independent transfer of a fatty acyl group at the sn-1 position of phosphatidylcholine (PC) and other glycerophospholipids to the primary amine of phosphatidylethanolamine (PE), forming N-acylphosphatidylethanolamine (NAPE), which serves as precursor for N-acylethanolamines (NAEs). This Mus musculus (Mouse) protein is Phospholipase A and acyltransferase 1.